Reading from the N-terminus, the 656-residue chain is Ribosome quality control complex subunit 1 (656 aa).

Residues 1–11 (MSSRALRKLQR) show a composition bias toward basic residues. Disordered regions lie at residues 1–35 (MSSRALRKLQRQRQTELLEEALDSESDEDDEFSST), 51–122 (NNAI…LESS), and 634–656 (LFTSTNSETEPAEESTEEMGQGD). Positions 17–32 (LLEEALDSESDEDDEF) are enriched in acidic residues. Over residues 51–63 (NNAINSEAEKSVS) the composition is skewed to basic and acidic residues. Ser56, Ser61, and Ser63 each carry phosphoserine. Basic residues predominate over residues 83 to 101 (KKAKNKKKKKKQQKKKKVT). Positions 102–122 (GKRDLDNQSSDNEKLEGLESS) are enriched in basic and acidic residues. 2 positions are modified to phosphoserine: Ser110 and Ser111.

This sequence belongs to the TCF25 family. Component of the ribosome quality control complex (RQC), composed of the E3 ubiquitin ligase rkr1/ltn1, rqc1 and mtr1/rqc2, as well as cdc48 and its ubiquitin-binding cofactors. RQC forms a stable complex with 60S ribosomal subunits.

Its subcellular location is the cytoplasm. Its function is as follows. Component of the ribosome quality control complex (RQC), a ribosome-associated complex that mediates ubiquitination and extraction of incompletely synthesized nascent chains for proteasomal degradation. Within the RQC complex, rqc1 is essential for the recruitment of cdc48 to incompletely synthesized nascent polypeptides that are ubiquitinated by rkr1/ltn1. The sequence is that of Ribosome quality control complex subunit 1 from Schizosaccharomyces pombe (strain 972 / ATCC 24843) (Fission yeast).